Consider the following 212-residue polypeptide: ATP synthase F(0) complex subunit a (212 aa).

A run of 6 helical transmembrane segments spans residues 3-23 (MMGIPLILIAIILPMLLMFTS), 58-78 (WAAMLITLMIFLLSMNMLGLL), 87-107 (QLSMNMALAAPLWLATVLTGL), 128-148 (IPLLIIIETVSLFIRPLALGV), 154-174 (LTAGHLLIQLISTAAFVLMPT), and 179-199 (ALSTLIVLMLLTGLEIAVAMI).

This sequence belongs to the ATPase A chain family. Component of the ATP synthase complex composed at least of ATP5F1A/subunit alpha, ATP5F1B/subunit beta, ATP5MC1/subunit c (homooctomer), MT-ATP6/subunit a, MT-ATP8/subunit 8, ATP5ME/subunit e, ATP5MF/subunit f, ATP5MG/subunit g, ATP5MK/subunit k, ATP5MJ/subunit j, ATP5F1C/subunit gamma, ATP5F1D/subunit delta, ATP5F1E/subunit epsilon, ATP5PF/subunit F6, ATP5PB/subunit b, ATP5PD/subunit d, ATP5PO/subunit OSCP. ATP synthase complex consists of a soluble F(1) head domain (subunits alpha(3) and beta(3)) - the catalytic core - and a membrane F(0) domain - the membrane proton channel (subunits c, a, 8, e, f, g, k and j). These two domains are linked by a central stalk (subunits gamma, delta, and epsilon) rotating inside the F1 region and a stationary peripheral stalk (subunits F6, b, d, and OSCP). Interacts with DNAJC30; interaction is direct.

It is found in the mitochondrion inner membrane. The catalysed reaction is H(+)(in) = H(+)(out). Its function is as follows. Subunit a, of the mitochondrial membrane ATP synthase complex (F(1)F(0) ATP synthase or Complex V) that produces ATP from ADP in the presence of a proton gradient across the membrane which is generated by electron transport complexes of the respiratory chain. ATP synthase complex consist of a soluble F(1) head domain - the catalytic core - and a membrane F(1) domain - the membrane proton channel. These two domains are linked by a central stalk rotating inside the F(1) region and a stationary peripheral stalk. During catalysis, ATP synthesis in the catalytic domain of F(1) is coupled via a rotary mechanism of the central stalk subunits to proton translocation. With the subunit c (ATP5MC1), forms the proton-conducting channel in the F(0) domain, that contains two crucial half-channels (inlet and outlet) that facilitate proton movement from the mitochondrial intermembrane space (IMS) into the matrix. Protons are taken up via the inlet half-channel and released through the outlet half-channel, following a Grotthuss mechanism. The protein is ATP synthase F(0) complex subunit a of Tropidurus montanus (Lizard).